The chain runs to 629 residues: Chaperone protein HtpG (629 aa).

Residues 1–335 (MSSNPTSSVR…TEDLPLNVSR (335 aa)) are a; substrate-binding. The segment at 336 to 547 (ELVQASPVMA…KDALDSQFEK (212 aa)) is b. The c stretch occupies residues 548 to 629 (MMKMMNKDAD…NELVEAATRS (82 aa)).

Belongs to the heat shock protein 90 family. In terms of assembly, homodimer.

Its subcellular location is the cytoplasm. In terms of biological role, molecular chaperone. Has ATPase activity. The chain is Chaperone protein HtpG from Chlorobaculum tepidum (strain ATCC 49652 / DSM 12025 / NBRC 103806 / TLS) (Chlorobium tepidum).